We begin with the raw amino-acid sequence, 1475 residues long: Sterol 3-beta-glucosyltransferase (1475 aa).

Disordered regions lie at residues M1–F73 and H94–K218. The span at L8–A17 shows a compositional bias: low complexity. Positions R30–H40 are enriched in basic residues. The span at G108–H118 shows a compositional bias: basic and acidic residues. Positions E156–L168 are enriched in basic residues. Positions Q270 to K315 constitute a GRAM 1 domain. Residues E318–F413 form the PH domain. Disordered stretches follow at residues A492–K541, S594–P636, and Q653–P715. Positions Q505–A531 are enriched in low complexity. Polar residues-rich tracts occupy residues Q621–E634 and Q653–R674. A compositionally biased stretch (basic and acidic residues) spans T675–R686. The region spanning R798–Q901 is the GRAM 2 domain. S989, R990, D992, A1293, H1295, H1308, S1311, G1312, T1313, D1332, and Q1333 together coordinate UDP-alpha-D-glucose. The segment at I1413–A1475 is disordered. A compositionally biased stretch (acidic residues) spans E1416 to E1425.

Belongs to the glycosyltransferase 28 family.

The protein resides in the cytoplasm. It localises to the preautophagosomal structure membrane. It catalyses the reaction a sterol + UDP-alpha-D-glucose = a sterol 3-beta-D-glucoside + UDP + H(+). It carries out the reaction ergosterol + UDP-alpha-D-glucose = ergosteryl 3-beta-D-glucoside + UDP + H(+). Sterol glycosyltransferase responsible for the glycosylation of ergosterol to form ergosterol-glucoside. Mediates autophagic degradation of peroxisomes (pexophagy) and is involved in pathogenesis via peroxisome degradation inside appressoria that are developing into the host invasion stage. The polypeptide is Sterol 3-beta-glucosyltransferase (Glomerella lagenarium (Anthracnose fungus)).